A 298-amino-acid polypeptide reads, in one-letter code: Thymidylate synthase (298 aa).

DUMP is bound by residues Arg-25 and 159 to 160 (RR). Residue Cys-179 is the Nucleophile of the active site. DUMP-binding positions include 200–203 (RSVD), Asn-211, and 241–243 (HLY). A (6R)-5,10-methylene-5,6,7,8-tetrahydrofolate-binding site is contributed by Asp-203. Residue Ala-297 coordinates (6R)-5,10-methylene-5,6,7,8-tetrahydrofolate.

The protein belongs to the thymidylate synthase family. Bacterial-type ThyA subfamily. As to quaternary structure, homodimer.

The protein localises to the cytoplasm. It carries out the reaction dUMP + (6R)-5,10-methylene-5,6,7,8-tetrahydrofolate = 7,8-dihydrofolate + dTMP. The protein operates within pyrimidine metabolism; dTTP biosynthesis. In terms of biological role, catalyzes the reductive methylation of 2'-deoxyuridine-5'-monophosphate (dUMP) to 2'-deoxythymidine-5'-monophosphate (dTMP) while utilizing 5,10-methylenetetrahydrofolate (mTHF) as the methyl donor and reductant in the reaction, yielding dihydrofolate (DHF) as a by-product. This enzymatic reaction provides an intracellular de novo source of dTMP, an essential precursor for DNA biosynthesis. The sequence is that of Thymidylate synthase from Cereibacter sphaeroides (strain ATCC 17029 / ATH 2.4.9) (Rhodobacter sphaeroides).